The sequence spans 97 residues: Co-chaperonin GroES (97 aa).

Belongs to the GroES chaperonin family. As to quaternary structure, heptamer of 7 subunits arranged in a ring. Interacts with the chaperonin GroEL.

The protein resides in the cytoplasm. Functionally, together with the chaperonin GroEL, plays an essential role in assisting protein folding. The GroEL-GroES system forms a nano-cage that allows encapsulation of the non-native substrate proteins and provides a physical environment optimized to promote and accelerate protein folding. GroES binds to the apical surface of the GroEL ring, thereby capping the opening of the GroEL channel. This chain is Co-chaperonin GroES, found in Burkholderia cepacia (Pseudomonas cepacia).